The sequence spans 201 residues: Protein VirD3 (201 aa).

Disordered stretches follow at residues 28-51 and 139-171; these read ASSSALSNVQGDVRDRPIPTSSSR and RVNSDRRLPTDAENHPETRDPRKGRGSHGVTPA. Basic and acidic residues predominate over residues 141-161; sequence NSDRRLPTDAENHPETRDPRK.

In Rhizobium radiobacter (Agrobacterium tumefaciens), this protein is Protein VirD3 (virD3).